The following is a 593-amino-acid chain: Melanopsin-A (593 aa).

Topologically, residues 1–77 are extracellular; sequence MMSGAAHSVR…VDVPDHAHYT (77 aa). A helical membrane pass occupies residues 78-98; sequence IGAVILTVGITGMLGNFLVIY. The Cytoplasmic segment spans residues 99–112; sequence AFSRSRTLRTPANL. A helical transmembrane segment spans residues 113-133; the sequence is FIINLAITDFLMCATQAPIFF. Residues 134–150 are Extracellular-facing; the sequence is TTSMHKRWIFGEKGCEL. Cysteines 148 and 226 form a disulfide. Residues 151 to 171 form a helical membrane-spanning segment; it reads YAFCGALFGICSMITLMVIAV. Residues 172–191 are Cytoplasmic-facing; that stretch reads DRYFVITRPLASIGVLSQKR. The helical transmembrane segment at 192–212 threads the bilayer; the sequence is ALLILLVAWVYSLGWSLPPFF. Over 213 to 243 the chain is Extracellular; it reads GWSAYVPEGLLTSCTWDYMTFTPSVRAYTML. A helical membrane pass occupies residues 244–264; sequence LFIFVFFIPLIVIIYCYFFIF. The Cytoplasmic segment spans residues 265-300; it reads RSIRTTNEAVGKINGDNKRDSMKRFQRLKNEWKMAK. A helical membrane pass occupies residues 301–321; sequence IALIVILMYVISWSPYSTVAL. The Extracellular segment spans residues 322-336; sequence TAFAGYSDFLTPYMN. Residues 337–357 traverse the membrane as a helical segment; sequence SVPAVIAKASAIHNPIIYAIT. Residue Lys344 is modified to N6-(retinylidene)lysine. The Cytoplasmic portion of the chain corresponds to 358–593; that stretch reads HPKYRLAIAK…HIDNHRPQYL (236 aa). 2 disordered regions span residues 397–449 and 547–593; these read TVTS…RQVS and RSNV…PQYL. Polar residues predominate over residues 414-449; that stretch reads TGKSRLSSASDSESGWTDTEADLSSMSSRPASRQVS. Basic and acidic residues predominate over residues 581–593; it reads ESGHIDNHRPQYL.

It belongs to the G-protein coupled receptor 1 family. Opsin subfamily.

The protein localises to the cell membrane. Its function is as follows. Photoreceptor implicated in non-image-forming responses to light. May be able to isomerize covalently bound all-trans retinal back to 11-cis retinal. This is Melanopsin-A (opn4a) from Danio rerio (Zebrafish).